The primary structure comprises 328 residues: YDG domain-containing protein At5g47150 (328 aa).

The YDG domain occupies 176-320 (GSVPGINIGD…KSVYKFKLCR (145 aa)).

It localises to the nucleus. The sequence is that of YDG domain-containing protein At5g47150 from Arabidopsis thaliana (Mouse-ear cress).